We begin with the raw amino-acid sequence, 497 residues long: MTYLLALDQGTSSSRSIVFDELGHIVAQAQQELPQIYPKPGWVEHDPMEIWRTQLATAREALGKAGLKASDIRALGITNQRETTVVWHRATGQPIHNAIVWQDRRAEATCAQLREQGKEALIQSKTGLLIDAYFSGTKLKWLLDNVPGVRAQAERGELAFGTIDSWLMWQLTGGALHATDVSNASRTMLFNVRTNQWDAELLDLLGIPASLMPQVLPSSAHYGETRPELLGHAIAIGGVAGDQQSALFGQACFKAGMAKNTYGTGCFMLMHTGTQFQTSHNGLLTTSAAQTTAHPEFAMEGSVFVGGAVVQWLRDGLHAIQGSGEVQALAQSVPDSGGVMMVPAFTGLGAPYWKPDARGTITGLTRGTTVAHIARAALESIAYQSAALLQAMSRDAVSSGAAPLAELRVDGGACANDLLMQFQADLLGIPVLRPAVIETTALGAAYLAGLSSGVYRSTDELSGMWRAERTFLPTLGADSAAALMNRWEHAVRQTVLP.

Thr11 contributes to the ADP binding site. ATP contacts are provided by Thr11, Ser12, and Ser13. A sn-glycerol 3-phosphate-binding site is contributed by Thr11. An ADP-binding site is contributed by Arg15. Sn-glycerol 3-phosphate contacts are provided by Arg81, Glu82, Tyr133, and Asp242. Residues Arg81, Glu82, Tyr133, Asp242, and Gln243 each coordinate glycerol. ADP-binding residues include Thr264 and Gly307. 4 residues coordinate ATP: Thr264, Gly307, Gln311, and Gly412. The ADP site is built by Gly412 and Asn416.

This sequence belongs to the FGGY kinase family.

It catalyses the reaction glycerol + ATP = sn-glycerol 3-phosphate + ADP + H(+). It participates in polyol metabolism; glycerol degradation via glycerol kinase pathway; sn-glycerol 3-phosphate from glycerol: step 1/1. Its activity is regulated as follows. Inhibited by fructose 1,6-bisphosphate (FBP). Key enzyme in the regulation of glycerol uptake and metabolism. Catalyzes the phosphorylation of glycerol to yield sn-glycerol 3-phosphate. This is Glycerol kinase from Polaromonas sp. (strain JS666 / ATCC BAA-500).